Here is a 72-residue protein sequence, read N- to C-terminus: Alpha-elapitoxin-Ast2b (72 aa).

5 disulfides stabilise this stretch: Cys3/Cys20, Cys13/Cys41, Cys26/Cys30, Cys45/Cys56, and Cys57/Cys62. The residue at position 72 (Arg72) is an Arginine amide.

The protein belongs to the three-finger toxin family. Long-chain subfamily. Type II alpha-neurotoxin sub-subfamily. As to expression, expressed by the venom gland.

Its subcellular location is the secreted. In terms of biological role, binds with high affinity to muscular (alpha-1/CHRNA1) and neuronal (alpha-7/CHRNA7) nicotinic acetylcholine receptor (nAChR) and inhibits acetylcholine from binding to the receptor, thereby impairing neuromuscular and neuronal transmission. The sequence is that of Alpha-elapitoxin-Ast2b from Hydrophis stokesii (Stokes's sea snake).